The following is a 601-amino-acid chain: Glutathione-regulated potassium-efflux system protein KefB (601 aa).

13 helical membrane-spanning segments follow: residues 4–24 (SDLLTAGVMFLFAAVAAVPLA), 29–49 (IGAVLGYLLAGIAIGPWGLGF), 55–75 (EILHFSELGVVFLMFIIGLEL), 87–107 (IFGVGAAQVMLSAVVLAGLLM), 115–135 (AAVIGGIGLAMSSTAMALQLM), 152–172 (VLLFQDLAVIPALALVPLLAG), 177–197 (HFDWIKVGMKVLAFAGMLIGG), 207–227 (FIADSGVREVFTAATLLLVLG), 230–250 (LFMDALGLSMALGTFIAGVLL), 262–282 (AIDPFKGLLLGLFFISVGMSL), 284–304 (LGVLYTHLLWVAVSVIVLVAV), 324–344 (MQFAGVLSQGGEFAFVLFSTA), and 356–376 (SLLLVTVTLSMMTTPLLMKLV). An RCK N-terminal domain is found at 400–519 (KPQVIVVGFG…AGVTQFSRET (120 aa)).

It belongs to the monovalent cation:proton antiporter 2 (CPA2) transporter (TC 2.A.37) family. KefB subfamily. Interacts with the regulatory subunit KefG.

It is found in the cell inner membrane. Its function is as follows. Pore-forming subunit of a potassium efflux system that confers protection against electrophiles. Catalyzes K(+)/H(+) antiport. This chain is Glutathione-regulated potassium-efflux system protein KefB, found in Citrobacter koseri (strain ATCC BAA-895 / CDC 4225-83 / SGSC4696).